The chain runs to 69 residues: DNA-directed RNA polymerase subunit omega (69 aa).

This sequence belongs to the RNA polymerase subunit omega family. In terms of assembly, the RNAP catalytic core consists of 2 alpha, 1 beta, 1 beta' and 1 omega subunit. When a sigma factor is associated with the core the holoenzyme is formed, which can initiate transcription.

The catalysed reaction is RNA(n) + a ribonucleoside 5'-triphosphate = RNA(n+1) + diphosphate. In terms of biological role, promotes RNA polymerase assembly. Latches the N- and C-terminal regions of the beta' subunit thereby facilitating its interaction with the beta and alpha subunits. The sequence is that of DNA-directed RNA polymerase subunit omega from Exiguobacterium sp. (strain ATCC BAA-1283 / AT1b).